A 281-amino-acid polypeptide reads, in one-letter code: ATP phosphoribosyltransferase (281 aa).

Belongs to the ATP phosphoribosyltransferase family. Long subfamily. The cofactor is Mg(2+).

It is found in the cytoplasm. The catalysed reaction is 1-(5-phospho-beta-D-ribosyl)-ATP + diphosphate = 5-phospho-alpha-D-ribose 1-diphosphate + ATP. The protein operates within amino-acid biosynthesis; L-histidine biosynthesis; L-histidine from 5-phospho-alpha-D-ribose 1-diphosphate: step 1/9. With respect to regulation, feedback inhibited by histidine. Catalyzes the condensation of ATP and 5-phosphoribose 1-diphosphate to form N'-(5'-phosphoribosyl)-ATP (PR-ATP). Has a crucial role in the pathway because the rate of histidine biosynthesis seems to be controlled primarily by regulation of HisG enzymatic activity. The polypeptide is ATP phosphoribosyltransferase (Corynebacterium efficiens (strain DSM 44549 / YS-314 / AJ 12310 / JCM 11189 / NBRC 100395)).